We begin with the raw amino-acid sequence, 82 residues long: UPF0298 protein SMU_1670c (82 aa).

Belongs to the UPF0298 family.

It is found in the cytoplasm. This Streptococcus mutans serotype c (strain ATCC 700610 / UA159) protein is UPF0298 protein SMU_1670c.